The primary structure comprises 515 residues: MSYPQFGYPYSSAPQFLMTTNSLSTCCESGGRTLADSGPAASAQAPVYCPVYESRLLATARHELNSAAALGVYGSPYGSSQGYGNYVTYGSEASAFYSLNSFESKDGTGSSHAGLPPTAAAAYYPYEPALSQYPYDRYGTVDSGTRRKNATRETTSTLKAWLQEHRKNPYPTKGEKIMLAIITKMTLTQVSTWFANARRRLKKENKMTWPPRNKCADEKRPYGEGEEEEAGEEESREEPLKSAKSEGHAGKDDKELELSDLEDFDPLDAETSECELKTPFQSLDSGPERIPASSDGPGTGKEASTTLRMPLGTAGGAVMDGDLERARNCLRSTVVVPDSGAEGGPPACEAKLTFAQAGAPPNLETKPRIWSLAHTATAAAATALSQTEFPSCMLKRQGPTGVSATTPASSPAVTAPSGALDRHQDSPVTSLRNWVDGVFHDPILRHSTLNQAWATAKGALLDPGPLGRNLGAGTNVLTTPLACSFPPTVPQDVPPAGASRELLATPKAGGKPFCT.

Residues 144–205 constitute a DNA-binding region (homeobox; TALE-type); it reads GTRRKNATRE…NARRRLKKEN (62 aa). Disordered regions lie at residues 205–258, 278–307, and 398–425; these read NKMT…ELEL, TPFQ…STTL, and GPTG…RHQD. Positions 214–223 are enriched in basic and acidic residues; it reads KCADEKRPYG. Over residues 224–236 the composition is skewed to acidic residues; sequence EGEEEEAGEEESR. The span at 237 to 257 shows a compositional bias: basic and acidic residues; that stretch reads EEPLKSAKSEGHAGKDDKELE. The segment covering 399 to 419 has biased composition (low complexity); that stretch reads PTGVSATTPASSPAVTAPSGA.

It belongs to the TALE/IRO homeobox family. As to quaternary structure, interacts with the vitamin D receptor VDR but doesn't affect its transactivation activity. In terms of tissue distribution, expressed in the developing central nervous system, skin, and vibrissae, but predominantly expressed in the cardiac ventricles of the developing heart. Not expressed in the developing metanephric kidney or adult kidney.

It is found in the nucleus. Its function is as follows. Likely to be an important mediator of ventricular differentiation during cardiac development. The polypeptide is Iroquois-class homeodomain protein IRX-4 (Irx4) (Mus musculus (Mouse)).